A 388-amino-acid chain; its full sequence is Succinate--CoA ligase [ADP-forming] subunit beta (388 aa).

Residues 9–244 enclose the ATP-grasp domain; sequence KQLFARYGLP…PSQEDSREAH (236 aa). Residues Lys-46, 53-55, Glu-99, Thr-102, and Glu-107 each bind ATP; that span reads GRG. Asn-199 and Asp-213 together coordinate Mg(2+). Substrate-binding positions include Asn-264 and 321 to 323; that span reads GIV.

The protein belongs to the succinate/malate CoA ligase beta subunit family. In terms of assembly, heterotetramer of two alpha and two beta subunits. Mg(2+) is required as a cofactor.

It catalyses the reaction succinate + ATP + CoA = succinyl-CoA + ADP + phosphate. The enzyme catalyses GTP + succinate + CoA = succinyl-CoA + GDP + phosphate. The protein operates within carbohydrate metabolism; tricarboxylic acid cycle; succinate from succinyl-CoA (ligase route): step 1/1. Its function is as follows. Succinyl-CoA synthetase functions in the citric acid cycle (TCA), coupling the hydrolysis of succinyl-CoA to the synthesis of either ATP or GTP and thus represents the only step of substrate-level phosphorylation in the TCA. The beta subunit provides nucleotide specificity of the enzyme and binds the substrate succinate, while the binding sites for coenzyme A and phosphate are found in the alpha subunit. The chain is Succinate--CoA ligase [ADP-forming] subunit beta from Erwinia tasmaniensis (strain DSM 17950 / CFBP 7177 / CIP 109463 / NCPPB 4357 / Et1/99).